Consider the following 38-residue polypeptide: Photosystem II reaction center protein L (38 aa).

Residues 17–37 (SLYWGLLLIFVLAVLFSNYFF) form a helical membrane-spanning segment.

The protein belongs to the PsbL family. As to quaternary structure, PSII is composed of 1 copy each of membrane proteins PsbA, PsbB, PsbC, PsbD, PsbE, PsbF, PsbH, PsbI, PsbJ, PsbK, PsbL, PsbM, PsbT, PsbX, PsbY, PsbZ, Psb30/Ycf12, at least 3 peripheral proteins of the oxygen-evolving complex and a large number of cofactors. It forms dimeric complexes.

The protein resides in the plastid. The protein localises to the chloroplast thylakoid membrane. Its function is as follows. One of the components of the core complex of photosystem II (PSII). PSII is a light-driven water:plastoquinone oxidoreductase that uses light energy to abstract electrons from H(2)O, generating O(2) and a proton gradient subsequently used for ATP formation. It consists of a core antenna complex that captures photons, and an electron transfer chain that converts photonic excitation into a charge separation. This subunit is found at the monomer-monomer interface and is required for correct PSII assembly and/or dimerization. The chain is Photosystem II reaction center protein L from Angiopteris evecta (Mule's foot fern).